A 505-amino-acid chain; its full sequence is Maturase K (505 aa).

Belongs to the intron maturase 2 family. MatK subfamily.

The protein localises to the plastid. Its subcellular location is the chloroplast. Its function is as follows. Usually encoded in the trnK tRNA gene intron. Probably assists in splicing its own and other chloroplast group II introns. The chain is Maturase K from Idiospermum australiense (Ribbonwood tree).